Consider the following 337-residue polypeptide: Glyceraldehyde-3-phosphate dehydrogenase 1 (337 aa).

Residues 12–13 (RI), Asp-34, and Met-79 each bind NAD(+). Residues 151-153 (SCT), Thr-182, 211-212 (TG), and Arg-234 each bind D-glyceraldehyde 3-phosphate. Cys-152 acts as the Nucleophile in catalysis. Residue Asn-316 coordinates NAD(+).

Belongs to the glyceraldehyde-3-phosphate dehydrogenase family. In terms of assembly, homotetramer.

It localises to the cytoplasm. It carries out the reaction D-glyceraldehyde 3-phosphate + phosphate + NAD(+) = (2R)-3-phospho-glyceroyl phosphate + NADH + H(+). It functions in the pathway carbohydrate degradation; glycolysis; pyruvate from D-glyceraldehyde 3-phosphate: step 1/5. The polypeptide is Glyceraldehyde-3-phosphate dehydrogenase 1 (GAP1) (Giardia intestinalis (Giardia lamblia)).